A 47-amino-acid polypeptide reads, in one-letter code: Large ribosomal subunit protein bL34 (47 aa).

This sequence belongs to the bacterial ribosomal protein bL34 family.

The polypeptide is Large ribosomal subunit protein bL34 (Mycobacterium avium (strain 104)).